The following is a 754-amino-acid chain: Aspartyl/asparaginyl beta-hydroxylase (754 aa).

Residues Met1–Arg48 are disordered. Residues Met1–Ser56 are Cytoplasmic-facing. The segment covering Ser14–Gly34 has biased composition (low complexity). Ser15 carries the phosphoserine modification. The helical; Signal-anchor for type II membrane protein transmembrane segment at Phe57–Trp77 threads the bilayer. The Lumenal segment spans residues Phe78–Ile754. The N-linked (GlcNAc...) asparagine glycan is linked to Asn96. The Ca(2+) site is built by Asp109, Asp111, Asp113, Asp115, and Asp120. Disordered stretches follow at residues Val176–Pro197 and Glu247–Lys326. Composition is skewed to basic and acidic residues over residues Asp261–Val284 and Thr309–Lys318. TPR repeat units follow at residues Ile337–Ser370, Ala378–Pro411, Thr450–Asp483, Phe485–Gly517, and Gly521–Ala553. The N-linked (GlcNAc...) asparagine glycan is linked to Asn466. 2-oxoglutarate is bound at residue Trp621. Residues Cys637 and Cys644 are joined by a disulfide bond. A 2-oxoglutarate-binding site is contributed by Ser664. His675 contributes to the Fe cation binding site. Residue Arg684–His686 coordinates 2-oxoglutarate. Residue Asn702 is glycosylated (N-linked (GlcNAc...) asparagine). His721 serves as a coordination point for Fe cation. Arg731 lines the 2-oxoglutarate pocket.

Belongs to the aspartyl/asparaginyl beta-hydroxylase family. As to quaternary structure, monomer. Fe cation serves as cofactor. In terms of processing, might be processed to the 56 kDa (AA 289-754) or 52 kDa (AA 311-754) forms in the lumen of the endoplasmic reticulum.

It localises to the endoplasmic reticulum membrane. It carries out the reaction L-aspartyl-[protein] + 2-oxoglutarate + O2 = 3-hydroxy-L-aspartyl-[protein] + succinate + CO2. Specifically hydroxylates an Asp or Asn residue in certain epidermal growth factor-like (EGF) domains of a number of proteins. The polypeptide is Aspartyl/asparaginyl beta-hydroxylase (ASPH) (Bos taurus (Bovine)).